The following is a 1117-amino-acid chain: Sodium-driven chloride bicarbonate exchanger (1117 aa).

2 disordered regions span residues 1-23 (MEIK…EEAV) and 58-97 (GRKS…TPSQ). Residues 1–508 (MEIKDQGAQM…DFRDAFSLQC (508 aa)) are Cytoplasmic-facing. A compositionally biased stretch (basic residues) spans 59–76 (RKSHRRHRHRGHKHRKRD). S89 carries the phosphoserine modification. T94 carries the phosphothreonine modification. S275 bears the Phosphoserine mark. Disordered stretches follow at residues 282-309 (DFSK…KGPP) and 431-476 (WDPS…PELQ). The helical transmembrane segment at 509-529 (LASFLFLYCACMSPVITFGGL) threads the bilayer. The Extracellular portion of the chain corresponds to 530-537 (LGEATEGR). Residues 538 to 558 (ISAIESLFGASMTGIAYSLFG) traverse the membrane as a helical segment. Residues 559-561 (GQP) lie on the Cytoplasmic side of the membrane. Residues 562–582 (LTILGSTGPVLVFEKILFKFC) traverse the membrane as a helical segment. Residues 583–595 (KEYGLSYLSLRAS) are Extracellular-facing. Residues 596-616 (IGLWTATLCIILVATDASSLV) form a helical membrane-spanning segment. Residues 617 to 625 (CYITRFTEE) are Cytoplasmic-facing. Residues 626–646 (AFASLICIIFIYEALEKLFEL) form a helical membrane-spanning segment. The Extracellular portion of the chain corresponds to 647–719 (SESYPINMHN…VGRACGHGHP (73 aa)). N-linked (GlcNAc...) asparagine glycans are attached at residues N676, N686, and N696. Residues 720–740 (YVPDVLFWSVILFFSTVTMSA) form a helical membrane-spanning segment. Topologically, residues 741 to 761 (TLKQFKTSRYFPTKVRSIVSD) are cytoplasmic. A helical membrane pass occupies residues 762–782 (FAVFLTILCMVLIDYAIGIPS). Residues 783–808 (PKLQVPSVFKPTRDDRGWFVTPLGPN) are Extracellular-facing. A helical transmembrane segment spans residues 809–829 (PWWTIIAAIIPALLCTILIFM). Residues 830–854 (DQQITAVIINRKEHKLKKGCGYHLD) are Cytoplasmic-facing. The chain crosses the membrane as a helical span at residues 855-875 (LLMVAVMLGVCSIMGLPWFVA). The Extracellular portion of the chain corresponds to 876–911 (ATVLSITHVNSLKLESECSAPGEQPKFLGIREQRVT). Residues 912–932 (GLMIFILMGSSVFMTSILKFI) form a helical membrane-spanning segment. Residues 933 to 934 (PM) are Cytoplasmic-facing. Residues 935 to 955 (PVLYGVFLYMGASSLKGIQLF) traverse the membrane as a helical segment. Topologically, residues 956 to 997 (DRIKLFWMPAKHQPDFIYLRHVPLRKVHLFTVIQMSCLGLLW) are extracellular. Residues 998–1018 (IIKVSRAAIVFPMMVLALVFV) traverse the membrane as a helical segment. Topologically, residues 1019 to 1117 (RKLMDFLFTK…SRFPSKSSPS (99 aa)) are cytoplasmic. 2 positions are modified to phosphoserine: S1056 and S1084.

It belongs to the anion exchanger (TC 2.A.31) family. N-glycosylated. As to expression, in the brain, detected in cerebral cortex, subcortex, cerebellum, hippocampus and medulla (at protein level). Expressed in neurons but not in astrocytes (at protein level). Isoforms starting with Met-Glu-Ile-Lys are found predominantly in the brain with lower levels in the eye while isoforms starting with Met-Cys-Asp-Leu are most abundant in the kidney with lower levels in the duodenum, jejunum and ileum (at protein level). In the kidney, isoforms starting with Met-Cys-Asp-Leu are primarily expressed in the cortex, the outer stripe of the outer medulla and the inner stripe of the outer medulla (ISOM) but are not detectable in the inner medulla (IM) while isoforms starting with Met-Glu-Ile-Lys are predominantly expressed in the ISOM and IM. Expressed in the brain, in the hippocampus as well as in dentate gyrus, cortical layers, cerebellum, olfactory bulb and in the epithelial cells of the choroid plexus. Detected in pituitary, testis, kidney and ileum. Detected also in spleen and lung. Mainly expressed in the jejenum (at protein level).

Its subcellular location is the basolateral cell membrane. The protein localises to the apical cell membrane. It is found in the cell projection. It localises to the dendrite. The protein resides in the axon. Its subcellular location is the perikaryon. The protein localises to the presynapse. It is found in the postsynapse. The catalysed reaction is 2 hydrogencarbonate(out) + chloride(in) + Na(+)(out) = 2 hydrogencarbonate(in) + chloride(out) + Na(+)(in). In terms of biological role, sodium/bicarbonate cotransporter which plays an important role in regulating intracellular pH. Has been shown to act as a sodium/bicarbonate cotransporter in exchange for intracellular chloride. Has also been shown to act as a sodium/biocarbonate cotransporter which does not couple net influx of bicarbonate to net efflux of chloride, with the observed chloride efflux being due to chloride self-exchange. Controls neuronal pH and may contribute to the secretion of cerebrospinal fluid. Acting on presynaptic intracellular pH, it promotes GABA release, reduces the excitability of CA1 pyramidal neurons, and modulates short-term synaptic plasticity. Required in retinal cells to maintain normal pH which is necessary for normal vision. In the kidney, likely to mediate bicarbonate reclamation in the apical membrane of the proximal tubules. Functionally, sodium/bicarbonate cotransporter which mediates cotransport of sodium and bicarbonate in association with an efflux of intracellular chloride and is involved in NaCl absorption in the small intestine. This is Sodium-driven chloride bicarbonate exchanger from Rattus norvegicus (Rat).